The chain runs to 249 residues: DNA polymerase sliding clamp (249 aa).

Belongs to the PCNA family. As to quaternary structure, homotrimer which circularizes head-to-tail (head is a N-terminus, tail is at C-terminus) to form a toroid. RFC opens the toroid so it can load on DNA. Interacts with both Pol I (pol) and Pol II (polB-polC), with Hel308 (hjm) and with Hjc. Interaction with the C-terminal PIP-box of RfcL may stabilize the toroidal structure.

Its function is as follows. Sliding clamp subunit that acts as a moving platform for DNA processing. Responsible for tethering the catalytic subunit of DNA polymerase to DNA during high-speed replication. Unlike its eukaryotic paralog, loads on circular DNA without the replication factor C (RFC) clamp loader, although RFC greatly increases loading efficiency. Stimulates the ATPase activity of replication factor C (RFC) in the presence of ssDNA. Stimulates the helicase activity of Hel308 and may alter its substrate specificity. The chain is DNA polymerase sliding clamp from Pyrococcus furiosus (strain ATCC 43587 / DSM 3638 / JCM 8422 / Vc1).